Consider the following 213-residue polypeptide: Uracil phosphoribosyltransferase (213 aa).

5-phospho-alpha-D-ribose 1-diphosphate-binding positions include arginine 78, arginine 103, and 131–139 (DPMLATGGT). Uracil contacts are provided by residues isoleucine 197 and 202–204 (GDA). Aspartate 203 serves as a coordination point for 5-phospho-alpha-D-ribose 1-diphosphate.

The protein belongs to the UPRTase family. Mg(2+) serves as cofactor.

It carries out the reaction UMP + diphosphate = 5-phospho-alpha-D-ribose 1-diphosphate + uracil. It functions in the pathway pyrimidine metabolism; UMP biosynthesis via salvage pathway; UMP from uracil: step 1/1. Its activity is regulated as follows. Allosterically activated by GTP. Functionally, catalyzes the conversion of uracil and 5-phospho-alpha-D-ribose 1-diphosphate (PRPP) to UMP and diphosphate. This Bifidobacterium animalis subsp. lactis (strain AD011) protein is Uracil phosphoribosyltransferase.